Consider the following 384-residue polypeptide: tRNA-specific 2-thiouridylase MnmA (384 aa).

Residues 18 to 25 (AMSGGVDS) and Leu44 each bind ATP. The active-site Nucleophile is the Cys112. Cysteines 112 and 209 form a disulfide. An ATP-binding site is contributed by Gly136. An interaction with tRNA region spans residues 159–161 (RDQ). Catalysis depends on Cys209, which acts as the Cysteine persulfide intermediate.

It belongs to the MnmA/TRMU family.

It localises to the cytoplasm. The catalysed reaction is S-sulfanyl-L-cysteinyl-[protein] + uridine(34) in tRNA + AH2 + ATP = 2-thiouridine(34) in tRNA + L-cysteinyl-[protein] + A + AMP + diphosphate + H(+). Catalyzes the 2-thiolation of uridine at the wobble position (U34) of tRNA, leading to the formation of s(2)U34. This Methylobacterium radiotolerans (strain ATCC 27329 / DSM 1819 / JCM 2831 / NBRC 15690 / NCIMB 10815 / 0-1) protein is tRNA-specific 2-thiouridylase MnmA.